The primary structure comprises 997 residues: Glutamate [NMDA] receptor subunit 1 (997 aa).

A signal peptide spans 1–26 (MAMAEFVFCRPLFGLAIVLLVAPIDA). The Extracellular portion of the chain corresponds to 27–573 (AQRHTASDNP…TLVSFLQPFS (547 aa)). Residues asparagine 258, asparagine 314, asparagine 345, asparagine 397, asparagine 454, asparagine 481, and asparagine 501 are each glycosylated (N-linked (GlcNAc...) asparagine). Glycine-binding positions include 530–532 (PLT) and arginine 537. A helical transmembrane segment spans residues 574–594 (NTLWILVMVSVHVVALVLYLL). Residues 595–651 (DRFSPFGRFKLSHSDSNEEKALNLSSAVWFAWGVLLNSGIGEGTPRSFSARVLGMVW) are Cytoplasmic-facing. Residues 652-672 (AGFAMIIVASYTANLAAFLVL) traverse the membrane as a helical segment. Over 673-831 (ERPKTKLSGI…KTPNTLGLKN (159 aa)) the chain is Extracellular. Residue asparagine 693 is glycosylated (N-linked (GlcNAc...) asparagine). Glycine-binding residues include serine 703 and aspartate 747. The chain crosses the membrane as a helical span at residues 832 to 852 (MAGVFILVGVGIAGGVGLIII). Residues 853–997 (EVIYKKHQVK…YTSDVSHLVV (145 aa)) lie on the Cytoplasmic side of the membrane. The segment at 970–997 (LGKTRPQQSVLPPRYSPGYTSDVSHLVV) is disordered. The span at 987–997 (GYTSDVSHLVV) shows a compositional bias: polar residues.

Belongs to the glutamate-gated ion channel (TC 1.A.10.1) family. In terms of assembly, forms a heteromeric NMDA channel with Nmdar2. As to expression, highly expressed in adult heads: in the brain and ring gland. Low expression throughout the entire brain is also seen. Higher expression levels were observed in some scattered cell bodies and part of their fibers, including those from several pairs of DPM (dorsal-posterior-medial) neurons surrounding the calyx, DAL (dorsal-anterior-lateral) and DPL (dorsal-posterior-lateral) neurons in the lateral protocerebrum (LP), VAL (ventral-anterior-lateral) neurons in the anterior protocerebrum, and two pairs of VP (ventral-posterior) neurons in the posterior protocerebrum. Many cell bodies in the optic lobes show preferential expression. Punctuate expression is notably detected in many brain regions including the superior medial protocerebrum. Weakly expressed in the antennal lobes and central complex.

The protein resides in the cell membrane. Its subcellular location is the postsynaptic cell membrane. The protein localises to the postsynaptic density. Its function is as follows. NMDA receptor subtype of glutamate-gated ion channels with high calcium permeability and voltage-dependent sensitivity to magnesium. Mediated by glycine. This protein plays a key role in synaptic plasticity, synaptogenesis, excitotoxicity, memory acquisition and learning. It mediates neuronal functions in glutamate neurotransmission. Is involved in the cell surface targeting of NMDA receptors. Plays a role in associative learning and in long-term memory consolidation. The chain is Glutamate [NMDA] receptor subunit 1 from Drosophila melanogaster (Fruit fly).